Reading from the N-terminus, the 103-residue chain is Signal recognition particle 19 kDa protein (103 aa).

It belongs to the SRP19 family. In terms of assembly, part of the signal recognition particle protein translocation system, which is composed of SRP and FtsY. Archaeal SRP consists of a 7S RNA molecule of 300 nucleotides and two protein subunits: SRP54 and SRP19.

Its subcellular location is the cytoplasm. In terms of biological role, involved in targeting and insertion of nascent membrane proteins into the cytoplasmic membrane. Binds directly to 7S RNA and mediates binding of the 54 kDa subunit of the SRP. This Hyperthermus butylicus (strain DSM 5456 / JCM 9403 / PLM1-5) protein is Signal recognition particle 19 kDa protein.